Consider the following 846-residue polypeptide: Aminopeptidase N (846 aa).

Substrate contacts are provided by residues Glu-120 and 252–256 (GAMEN). Residue His-288 participates in Zn(2+) binding. Residue Glu-289 is the Proton acceptor of the active site. Zn(2+) is bound by residues His-292 and Glu-311.

The protein belongs to the peptidase M1 family. In terms of assembly, monomer. It depends on Zn(2+) as a cofactor.

The protein resides in the cytoplasm. The enzyme catalyses Release of an N-terminal amino acid, Xaa-|-Yaa- from a peptide, amide or arylamide. Xaa is preferably Ala, but may be most amino acids including Pro (slow action). When a terminal hydrophobic residue is followed by a prolyl residue, the two may be released as an intact Xaa-Pro dipeptide.. Its function is as follows. Aminopeptidase with broad substrate specificity to several peptides. It has more affinity for oligopeptides than for dipeptides. It plays an essential role in the metabolism, it may be involved in nitrogen supply or protein turnover. This chain is Aminopeptidase N (pepN), found in Lactococcus lactis subsp. cremoris (Streptococcus cremoris).